Here is a 534-residue protein sequence, read N- to C-terminus: Cytochrome P450 78A9 (534 aa).

Residues 26–46 form a helical membrane-spanning segment; it reads LALSLLVASLASLALSLFFWS. Position 474 (cysteine 474) interacts with heme.

The protein belongs to the cytochrome P450 family. Requires heme as cofactor. In terms of tissue distribution, expressed in the funiculus of developing ovules.

It is found in the membrane. Functionally, plays a role in seed and fruit development. Functions probably in association with CYP78A6 in the regulation of seed growth. The protein is Cytochrome P450 78A9 (CYP78A9) of Arabidopsis thaliana (Mouse-ear cress).